The sequence spans 471 residues: Argininosuccinate lyase (471 aa).

This sequence belongs to the lyase 1 family. Argininosuccinate lyase subfamily.

It is found in the cytoplasm. The enzyme catalyses 2-(N(omega)-L-arginino)succinate = fumarate + L-arginine. Its pathway is amino-acid biosynthesis; L-arginine biosynthesis; L-arginine from L-ornithine and carbamoyl phosphate: step 3/3. The protein is Argininosuccinate lyase of Parasynechococcus marenigrum (strain WH8102).